A 445-amino-acid polypeptide reads, in one-letter code: Mutanase Pc12g07500 (445 aa).

A signal peptide spans M1–T21. N386 and N437 each carry an N-linked (GlcNAc...) asparagine glycan.

Belongs to the glycosyl hydrolase 71 family. In terms of assembly, monomer.

The protein localises to the secreted. The catalysed reaction is Endohydrolysis of (1-&gt;3)-alpha-D-glucosidic linkages in isolichenin, pseudonigeran and nigeran.. In terms of biological role, hydrolyzes 1,3-alpha-glucan predominantly into pentasaccharides. May enhance the efficacy of fungal antibiotics by degrading bacterial exopolysaccharides. The chain is Mutanase Pc12g07500 from Penicillium rubens (strain ATCC 28089 / DSM 1075 / NRRL 1951 / Wisconsin 54-1255) (Penicillium chrysogenum).